A 165-amino-acid chain; its full sequence is Large ribosomal subunit protein uL10 (165 aa).

Belongs to the universal ribosomal protein uL10 family. Part of the ribosomal stalk of the 50S ribosomal subunit. The N-terminus interacts with L11 and the large rRNA to form the base of the stalk. The C-terminus forms an elongated spine to which L12 dimers bind in a sequential fashion forming a multimeric L10(L12)X complex.

Forms part of the ribosomal stalk, playing a central role in the interaction of the ribosome with GTP-bound translation factors. In Shewanella halifaxensis (strain HAW-EB4), this protein is Large ribosomal subunit protein uL10.